The chain runs to 394 residues: MEFRIGEALIGEGFEVAHVDLIIGTKDSPAGIAFANALANLSAGHTPLLAVLRPNLITKPPAVIVPKVTVKDMHQAELIFGPAQAAVAKAVADAVEEGIIPRERADEYVVVASVFIHPNAKNKHKIYYYNYGATKLAIKRAMQNFPDVDTVLYEKDRSFHPFVGRKLTKLWDPPYLQIAIDIPDLGEVLKVLEQIPDSDHIVFEVGTPLAKRYGCEVILKLREVKPDAFYILDLKTLDVGNLEARMAADATANAVVISGLAPTSTIVKGIREAEKTGILSYVDMMNVDDPIKRLEEIQKAGVLPNVVELHRAIDSEDKEPPWMLAGKIKEKFSVLVAVAGGIRPENVEEVIAAGADIIVVGRAVTKARDVEGAVRKFMSHMKPDTDQFRIMTDF.

Residues 1 to 162 are formaldehyde-activating enzyme; it reads MEFRIGEALI…YEKDRSFHPF (162 aa). His18 functions as the Proton donor in the catalytic mechanism. Positions 20, 49, 67, 69, and 84 each coordinate substrate. Residues 163–394 are 3-hexulose-6-phosphate synthase; the sequence is VGRKLTKLWD…TDQFRIMTDF (232 aa).

The protein in the N-terminal section; belongs to the formaldehyde-activating enzyme family. In the C-terminal section; belongs to the HPS/KGPDC family. HPS subfamily.

The catalysed reaction is 5,6,7,8-tetrahydromethanopterin + formaldehyde = 5,10-methylenetetrahydromethanopterin + H2O. It carries out the reaction D-ribulose 5-phosphate + formaldehyde = D-arabino-hex-3-ulose 6-phosphate. The protein operates within carbohydrate biosynthesis; D-ribose 5-phosphate biosynthesis. Its function is as follows. Catalyzes the condensation of formaldehyde with tetrahydromethanopterin (H(4)MPT) to 5,10-methylenetetrahydromethanopterin. Functionally, catalyzes the reversible formation of ribulose-5-phosphate and formaldehyde from 3-hexulose-6-phosphate. This is Bifunctional enzyme Fae/Hps from Archaeoglobus fulgidus (strain ATCC 49558 / DSM 4304 / JCM 9628 / NBRC 100126 / VC-16).